Here is a 318-residue protein sequence, read N- to C-terminus: Na(+)-translocating NADH-quinone reductase subunit C (318 aa).

Residues 13–33 traverse the membrane as a helical segment; sequence WYIILFIFVLSLVAGTLLSSV. Threonine 281 carries the post-translational modification FMN phosphoryl threonine.

The protein belongs to the NqrC family. As to quaternary structure, composed of six subunits; NqrA, NqrB, NqrC, NqrD, NqrE and NqrF. It depends on FMN as a cofactor.

Its subcellular location is the cell inner membrane. The catalysed reaction is a ubiquinone + n Na(+)(in) + NADH + H(+) = a ubiquinol + n Na(+)(out) + NAD(+). Functionally, NQR complex catalyzes the reduction of ubiquinone-1 to ubiquinol by two successive reactions, coupled with the transport of Na(+) ions from the cytoplasm to the periplasm. NqrA to NqrE are probably involved in the second step, the conversion of ubisemiquinone to ubiquinol. This chain is Na(+)-translocating NADH-quinone reductase subunit C, found in Chlamydia muridarum (strain MoPn / Nigg).